An 87-amino-acid polypeptide reads, in one-letter code: Large ribosomal subunit protein bL27 (87 aa).

The tract at residues Met-1 to Arg-25 is disordered. Polar residues predominate over residues Ala-7–Gln-19.

The protein belongs to the bacterial ribosomal protein bL27 family.

This Rhodococcus jostii (strain RHA1) protein is Large ribosomal subunit protein bL27.